Here is a 274-residue protein sequence, read N- to C-terminus: Thiamine kinase (274 aa).

The protein belongs to the thiamine kinase family.

The enzyme catalyses thiamine + ATP = thiamine phosphate + ADP + H(+). It functions in the pathway cofactor biosynthesis; thiamine diphosphate biosynthesis; thiamine phosphate from thiamine: step 1/1. Catalyzes the ATP-dependent phosphorylation of thiamine to thiamine phosphate. Is involved in thiamine salvage. This chain is Thiamine kinase, found in Escherichia coli O157:H7.